A 254-amino-acid polypeptide reads, in one-letter code: 5'-nucleotidase SurE (254 aa).

Asp-8, Asp-9, Ser-38, and Asn-91 together coordinate a divalent metal cation.

The protein belongs to the SurE nucleotidase family. It depends on a divalent metal cation as a cofactor.

The protein resides in the cytoplasm. It carries out the reaction a ribonucleoside 5'-phosphate + H2O = a ribonucleoside + phosphate. Nucleotidase that shows phosphatase activity on nucleoside 5'-monophosphates. The polypeptide is 5'-nucleotidase SurE (Anaeromyxobacter sp. (strain K)).